Consider the following 744-residue polypeptide: Prestin (744 aa).

The Cytoplasmic portion of the chain corresponds to 1 to 79 (MDHAEENEIP…WLPAYKFKEY (79 aa)). The chain crosses the membrane as a helical span at residues 80–105 (VLGDLVSGISTGVLQLPQGLAFAMLA). At 106 to 109 (AVPP) the chain is on the extracellular side. A helical transmembrane segment spans residues 110-125 (VFGLYSSFYPVIMYCF). Over 126–137 (FGTSRHISIGPF) the chain is Cytoplasmic. The helical transmembrane segment at 138–147 (AVISLMIGGV) threads the bilayer. The Extracellular portion of the chain corresponds to 148–178 (AVRLVPDDIVIPGGVNATNGTEARDALRVKV). Positions 158–168 (IPGGVNATNGT) match the Involved in motor function motif. N-linked (GlcNAc...) asparagine glycosylation is found at N163 and N166. The helical transmembrane segment at 179–196 (AMSVTLLSGIIQFCLGVC) threads the bilayer. The Cytoplasmic segment spans residues 197 to 208 (RFGFVAIYLTEP). The chain crosses the membrane as a helical span at residues 209 to 230 (LVRGFTTAAAVHVFTSMLKYLF). Residues 231 to 243 (GVKTKRYSGIFSV) are Extracellular-facing. Residues 244–252 (VYSTVAVLQ) constitute an intramembrane region (helical). The Extracellular portion of the chain corresponds to 253–258 (NVKNLN). A helical membrane pass occupies residues 259-282 (VCSLGVGLMVFGLLLGGKEFNERF). The Cytoplasmic segment spans residues 283-291 (KEKLPAPIP). Residues 292–304 (LEFFAVVMGTGIS) form a helical membrane-spanning segment. At 305–337 (AGFNLHESYSVDVVGTLPLGLLPPANPDTSLFH) the chain is on the extracellular side. The chain crosses the membrane as a helical span at residues 338 to 361 (LVYVDAIAIAIVGFSVTISMAKTL). Over 362 to 370 (ANKHGYQVD) the chain is Cytoplasmic. Residues 371–388 (GNQELIALGICNSIGSLF) traverse the membrane as a helical segment. Residues 389-396 (QTFSISCS) are Extracellular-facing. A helical transmembrane segment spans residues 397–406 (LSRSLVQEGT). S398 is a binding site for salicylate. Topologically, residues 407 to 410 (GGKT) are cytoplasmic. The chain crosses the membrane as a helical span at residues 411–429 (QLAGCLASLMILLVILATG). Residues 430–436 (FLFESLP) lie on the Extracellular side of the membrane. The helical transmembrane segment at 437–455 (QAVLSAIVIVNLKGMFMQF) threads the bilayer. The Cytoplasmic portion of the chain corresponds to 456-469 (SDLPFFWRTSKIEL). A helical membrane pass occupies residues 470 to 484 (TIWLTTFVSSLFLGL). D485 is a topological domain (extracellular). The helical transmembrane segment at 486 to 497 (YGLITAVIIALL) threads the bilayer. The Cytoplasmic portion of the chain corresponds to 498-744 (TVIYRTQSPS…PNATPTTPEA (247 aa)). Residues 505 to 718 (SPSYKVLGQL…AVLGSHVREA (214 aa)) form an extended region for STAS domain region. The 189-residue stretch at 525–713 (AYEEVKEIPG…HSIHDAVLGS (189 aa)) folds into the STAS domain. The segment at 717 to 744 (EAMAEQEASAPPPQDDMEPNATPTTPEA) is disordered.

The protein belongs to the SLC26A/SulP transporter (TC 2.A.53) family. In terms of assembly, homodimer. Interacts (via STAS domain) with CALM; this interaction is calcium-dependent and the STAS domain interacts with only one lobe of CALM which is an elongated conformation. Interacts with MYH1. In terms of tissue distribution, highly expressed in mature outer hair cells, but not in inner hair cells or other cells of the basilar membrane and the organ of Corti.

It is found in the lateral cell membrane. It catalyses the reaction 2 hydrogencarbonate(in) + chloride(out) = 2 hydrogencarbonate(out) + chloride(in). Voltage-sensitive motor protein that drives outer hair cell (OHC) electromotility (eM) and participates in sound amplification in the hearing organ. Converts changes in the transmembrane electric potential into mechanical displacements resulting in the coupling of its expansion to movement of a charged voltage sensor across the lipid membrane. The nature of the voltage sensor is not completely clear, and two models compete. In the first model, acts as an incomplete transporter where intracellular chloride anion acts as extrinsic voltage sensor that drives conformational change in the protein which is sufficient to produce a length change in the plane of the membrane and hence in the length of the OHC. The second model in which multiple charged amino acid residues are distributed at the intracellular and extracellular membrane interfaces that form an intrinsic voltage sensor, whose movement produces the non-linear capacitance (NLC). However, the effective voltage sensor may be the result of a hybrid voltage sensor assembled from intrinsic charge (charged residues) and extrinsic charge (bound anion). Notably, binding of anions to the anion-binding pocket partially neutralizes the intrinsic positive charge rather than to form an electrically negative sensor, therefore remaining charge may serve as voltage sensor that, after depolarization, moves from down (expanded state) to up (contracted) conformation, which is accompanied by an eccentric contraction of the intermembrane cross-sectional area of the protein as well as a major increase in the hydrophobic thickness of the protein having as consequences the plasma membrane thickening and the cell contraction after membrane depolarization. The anion-binding pocket transits from the inward-open (Down) state, where it is exposed toward the intracellular solvent in the absence of anion, to the occluded (Up) state upon anion binding. Salicylate competes for the anion-binding site and inhibits the voltage-sensor movement, and therefore inhibits the charge transfer and electromotility by displacing Cl(-) from the anion-binding site and by preventing the structural transitions to the contracted state. In addition, can act as a weak Cl(-)/HCO3 (-) antiporter across the cell membrane and so regulate the intracellular pH of the outer hair cells (OHCs), while firstly found as being unable to mediate electrogenic anion transport. Moreover, supports a role in cardiac mechanical amplification serving as an elastic element to enhance the actomyosin- based sarcomere contraction system. The chain is Prestin from Meriones unguiculatus (Mongolian jird).